Here is a 337-residue protein sequence, read N- to C-terminus: 6-phosphogluconolactonase (337 aa).

It belongs to the cycloisomerase 2 family.

It catalyses the reaction 6-phospho-D-glucono-1,5-lactone + H2O = 6-phospho-D-gluconate + H(+). Its pathway is carbohydrate degradation; pentose phosphate pathway; D-ribulose 5-phosphate from D-glucose 6-phosphate (oxidative stage): step 2/3. Its function is as follows. Catalyzes the hydrolysis of 6-phosphogluconolactone to 6-phosphogluconate. This chain is 6-phosphogluconolactonase, found in Blochmanniella pennsylvanica (strain BPEN).